The following is a 228-amino-acid chain: Ribonuclease 3 (228 aa).

Positions 8–130 constitute an RNase III domain; sequence LKRLERRVDY…IIGAAFLDSD (123 aa). Glu43 lines the Mg(2+) pocket. The active site involves Asp47. The Mg(2+) site is built by Asp116 and Glu119. Residue Glu119 is part of the active site. Residues 157–226 enclose the DRBM domain; that stretch reads DPKTRLQEHL…ANKMLDSLSG (70 aa).

It belongs to the ribonuclease III family. Homodimer. Mg(2+) serves as cofactor.

It is found in the cytoplasm. It carries out the reaction Endonucleolytic cleavage to 5'-phosphomonoester.. Digests double-stranded RNA. Involved in the processing of primary rRNA transcript to yield the immediate precursors to the large and small rRNAs (23S and 16S). Processes some mRNAs, and tRNAs when they are encoded in the rRNA operon. Processes pre-crRNA and tracrRNA of type II CRISPR loci if present in the organism. In Psychromonas ingrahamii (strain DSM 17664 / CCUG 51855 / 37), this protein is Ribonuclease 3.